The chain runs to 289 residues: G1/S-specific cyclin-D2 (289 aa).

Positions 26–151 (LQNLLTIEER…VLGKLKWNLA (126 aa)) constitute a Cyclin N-terminal domain. Residues 264-289 (QHNAGSKSVEDPDQATTPTDVRDVDL) form a disordered region. Serine 271 is subject to Phosphoserine. Threonine 280 is subject to Phosphothreonine.

It belongs to the cyclin family. Cyclin D subfamily. Interacts with either CDK4 or CDK6 protein kinase to form a serine/threonine kinase holoenzyme complex. The cyclin subunit imparts substrate specificity to the complex. Phosphorylation at Thr-280 by MAP kinases is required for ubiquitination and degradation by the DCX(AMBRA1) complex. Post-translationally, ubiquitinated by the DCX(AMBRA1) complex during the transition from G1 to S cell phase, leading to its degradation: ubiquitination is dependent on Thr-280 phosphorylation. The DCX(AMBRA1) complex represents the major regulator of CCND2 stability during the G1/S transition. Polyubiquitinated by the SCF(FBXL2) complex, leading to proteasomal degradation.

Its subcellular location is the nucleus. It localises to the cytoplasm. The protein localises to the nucleus membrane. In terms of biological role, regulatory component of the cyclin D2-CDK4 (DC) complex that phosphorylates and inhibits members of the retinoblastoma (RB) protein family including RB1 and regulates the cell-cycle during G(1)/S transition. Phosphorylation of RB1 allows dissociation of the transcription factor E2F from the RB/E2F complex and the subsequent transcription of E2F target genes which are responsible for the progression through the G(1) phase. Hypophosphorylates RB1 in early G(1) phase. Cyclin D-CDK4 complexes are major integrators of various mitogenenic and antimitogenic signals. This is G1/S-specific cyclin-D2 from Mus musculus (Mouse).